A 143-amino-acid chain; its full sequence is Large ribosomal subunit protein uL15 (143 aa).

Composition is skewed to basic residues over residues 1-13 (MIRKSKKITKMRG) and 23-38 (KKHRGAGHRGGRGNAG). Residues 1-38 (MIRKSKKITKMRGSRTCGYGEAKKHRGAGHRGGRGNAG) form a disordered region.

The protein belongs to the universal ribosomal protein uL15 family. Part of the 50S ribosomal subunit.

Binds to the 23S rRNA. This is Large ribosomal subunit protein uL15 from Methanococcus maripaludis (strain C6 / ATCC BAA-1332).